We begin with the raw amino-acid sequence, 305 residues long: Glycerol-3-phosphate dehydrogenase [NAD(P)+] (305 aa).

NADPH-binding residues include tryptophan 11, arginine 31, and lysine 79. Residues lysine 79 and glycine 107 each contribute to the sn-glycerol 3-phosphate site. Alanine 111 lines the NADPH pocket. The sn-glycerol 3-phosphate site is built by lysine 162, aspartate 215, serine 225, arginine 226, and asparagine 227. Lysine 162 functions as the Proton acceptor in the catalytic mechanism. Arginine 226 provides a ligand contact to NADPH. Residue glutamate 252 participates in NADPH binding.

It belongs to the NAD-dependent glycerol-3-phosphate dehydrogenase family.

The protein localises to the cytoplasm. It carries out the reaction sn-glycerol 3-phosphate + NAD(+) = dihydroxyacetone phosphate + NADH + H(+). The catalysed reaction is sn-glycerol 3-phosphate + NADP(+) = dihydroxyacetone phosphate + NADPH + H(+). It participates in membrane lipid metabolism; glycerophospholipid metabolism. Catalyzes the reduction of the glycolytic intermediate dihydroxyacetone phosphate (DHAP) to sn-glycerol 3-phosphate (G3P), the key precursor for phospholipid synthesis. The polypeptide is Glycerol-3-phosphate dehydrogenase [NAD(P)+] (Gloeobacter violaceus (strain ATCC 29082 / PCC 7421)).